The sequence spans 476 residues: tRNA(Ile)-lysidine synthase (476 aa).

30–35 (SGGPDS) provides a ligand contact to ATP.

The protein belongs to the tRNA(Ile)-lysidine synthase family.

The protein localises to the cytoplasm. The catalysed reaction is cytidine(34) in tRNA(Ile2) + L-lysine + ATP = lysidine(34) in tRNA(Ile2) + AMP + diphosphate + H(+). Its function is as follows. Ligates lysine onto the cytidine present at position 34 of the AUA codon-specific tRNA(Ile) that contains the anticodon CAU, in an ATP-dependent manner. Cytidine is converted to lysidine, thus changing the amino acid specificity of the tRNA from methionine to isoleucine. The protein is tRNA(Ile)-lysidine synthase of Bacillus anthracis.